The primary structure comprises 199 residues: Signal peptidase complex subunit 2 (199 aa).

Residues 1–49 are Cytoplasmic-facing; the sequence is MGKKDEKSQQGEELVKVNKWDGSAVKHALDDAVKTCLLGDRPQLKEQFG. Residues 50–72 form a helical membrane-spanning segment; the sequence is LVNTRLALCALAVSVAIMAHAWD. Topologically, residues 73–81 are lumenal; the sequence is FTHPFPESR. A helical transmembrane segment spans residues 82–104; that stretch reads PVLLFSVLAYFALLGILTLHSSF. Residues 105–199 lie on the Cytoplasmic side of the membrane; the sequence is REKGTFAVAL…KKNASSLSSN (95 aa).

Belongs to the SPCS2 family. As to quaternary structure, component of the signal peptidase complex (SPC) composed of a catalytic subunit twr/SEC11 and three accessory subunits Spase12/SPCS1, Spase25/SPCS2 and Spase22-23/SPCS3. The complex induces a local thinning of the ER membrane which is used to measure the length of the signal peptide (SP) h-region of protein substrates. This ensures the selectivity of the complex towards h-regions shorter than 18-20 amino acids.

The protein localises to the endoplasmic reticulum membrane. Its function is as follows. Component of the signal peptidase complex (SPC) which catalyzes the cleavage of N-terminal signal sequences from nascent proteins as they are translocated into the lumen of the endoplasmic reticulum. Enhances the enzymatic activity of SPC and facilitates the interactions between different components of the translocation site. This Drosophila melanogaster (Fruit fly) protein is Signal peptidase complex subunit 2 (Spase25).